The primary structure comprises 1059 residues: MPPPPHQKPENVLKRAHELIGVNQAPAALTLLHEHITSKRSRNVPIASLEPVMLLLVELSVEQKKGKLAKDALYQYKNIAQNTNVATIELVLKKFIELAAEKVTAAQAKADEVQSSIEATTSNIDDLEASETPESILLATVSGEQSRDRTDRAIVTPWLKFLWEAYRTVLDILRNNARLEVLYQSTAMQAFDFCLKYTRKTEFRRLCELLRNHVQTAAKYSAQMHAINLNDPDTLQRHLETRFQQLNVAVELELWQEAFRSVEDIHTLLSLSKRPAKNVMMANYYEKLTRIFLVGENYLFHAAAWARYYNLLRQSAALIASGHSKKADNPACSDADLQRAATFVILSALSIPVISTSRSRGAMVDFDEARKNKNSRLTHLLGMAQAPTRAGLFRDALSKSLLRRAQPQIRDLYNILEVDFHPLSICQKISPILAEIGADAEMQKYILPLQQVILTRLFQQLSQVYETVDLEFVESLAQFPEPFQVTRGTIEKFIMNGNKKGDLAIRMDHATGVLSFDADVFSSAKAVHAGSSAGSAESETGSVQRLQSTPSQIVRSQLTRLAEALYTTCRYIDPSFNEARIKARDEALARAKAGAEKEHQEVLARKEIIQTRKDKASEAQAQKEKENARKKLLQEQALQQAEAARLAEEQKLREAKRLANEREQIKRKEVEALLKDMKLEELQGEDIETLDSNKIRMIKLQQLEREKNSVAEKLRITGKRLDHLERAFRKEEAKKLPEDYAKQRERDLAAYERTKAQTLKEAELKHKADVELKHRLTRLMPFYESFRSDLHERRRDEFEKRRRDAEREMEKQINARRKEAREKRIREKREREERERQLREAEERAAREKEEERKRLEARREELQRLKEEKEKEREKLREIAARQQQREEEAMARRKAEKEKLAATPSAYRPPAAAERTEAAAPPRIALAGNRPSWREREAAKAASGETAAPAPAAAEPVAERPRAAAPPAERTEAAAPPRLALAGNRPSWREREAAKAASGGGNAAAVPERSAPPLRAAAPQRAGSGRPENDRDVPPAEPLKASGAPGKYVPKWRREGA.

Residues 99 to 130 (AAEKVTAAQAKADEVQSSIEATTSNIDDLEAS) adopt a coiled-coil conformation. One can recognise a PCI domain in the interval 337-521 (LQRAATFVIL…GVLSFDADVF (185 aa)). Residues 586 to 905 (EALARAKAGA…KAEKEKLAAT (320 aa)) are a coiled coil. Residues 794 to 902 (RRDEFEKRRR…ARRKAEKEKL (109 aa)) show a composition bias toward basic and acidic residues. Positions 794 to 1059 (RRDEFEKRRR…YVPKWRREGA (266 aa)) are disordered. Low complexity-rich tracts occupy residues 908-927 (AYRP…PRIA), 942-958 (KAAS…AAEP), 965-988 (AAAP…GNRP), and 1005-1024 (AAAV…PQRA).

Belongs to the eIF-3 subunit A family. In terms of assembly, component of the eukaryotic translation initiation factor 3 (eIF-3) complex.

It localises to the cytoplasm. In terms of biological role, RNA-binding component of the eukaryotic translation initiation factor 3 (eIF-3) complex, which is involved in protein synthesis of a specialized repertoire of mRNAs and, together with other initiation factors, stimulates binding of mRNA and methionyl-tRNAi to the 40S ribosome. The eIF-3 complex specifically targets and initiates translation of a subset of mRNAs involved in cell proliferation. The sequence is that of Eukaryotic translation initiation factor 3 subunit A (eif3a) from Neurospora crassa (strain ATCC 24698 / 74-OR23-1A / CBS 708.71 / DSM 1257 / FGSC 987).